The chain runs to 512 residues: GMP synthase [glutamine-hydrolyzing] (512 aa).

Residues 3-196 (NILILDFGSQ…VKHICQTSET (194 aa)) enclose the Glutamine amidotransferase type-1 domain. Cys80 acts as the Nucleophile in catalysis. Active-site residues include His169 and Glu171. One can recognise a GMPS ATP-PPase domain in the interval 197 to 387 (WKIETIEKQL…LGLPDVLISR (191 aa)). ATP is bound at residue 225 to 231 (SGGVDSS).

In terms of assembly, homodimer.

It catalyses the reaction XMP + L-glutamine + ATP + H2O = GMP + L-glutamate + AMP + diphosphate + 2 H(+). Its pathway is purine metabolism; GMP biosynthesis; GMP from XMP (L-Gln route): step 1/1. Catalyzes the synthesis of GMP from XMP. The protein is GMP synthase [glutamine-hydrolyzing] (guaA) of Chlamydia muridarum (strain MoPn / Nigg).